Here is a 438-residue protein sequence, read N- to C-terminus: Xylose isomerase (438 aa).

Active-site residues include His-100 and Asp-103. Mg(2+)-binding residues include Glu-231, Glu-267, His-270, Asp-295, Asp-306, Asp-308, and Asp-338.

The protein belongs to the xylose isomerase family. Homotetramer. Mg(2+) serves as cofactor.

It localises to the cytoplasm. The catalysed reaction is alpha-D-xylose = alpha-D-xylulofuranose. In Pseudomonas fluorescens (strain Pf0-1), this protein is Xylose isomerase.